Here is a 110-residue protein sequence, read N- to C-terminus: Large ribosomal subunit protein mL60 (110 aa).

This sequence belongs to the mitochondrion-specific ribosomal protein mL60 family. As to quaternary structure, component of the mitochondrial large ribosomal subunit (mt-LSU). Mature N.crassa 74S mitochondrial ribosomes consist of a small (37S) and a large (54S) subunit. The 37S small subunit contains a 16S ribosomal RNA (16S mt-rRNA) and 32 different proteins. The 54S large subunit contains a 23S rRNA (23S mt-rRNA) and 42 different proteins.

The protein resides in the mitochondrion. Component of the mitochondrial ribosome (mitoribosome), a dedicated translation machinery responsible for the synthesis of mitochondrial genome-encoded proteins, including at least some of the essential transmembrane subunits of the mitochondrial respiratory chain. The mitoribosomes are attached to the mitochondrial inner membrane and translation products are cotranslationally integrated into the membrane. In Neurospora crassa (strain ATCC 24698 / 74-OR23-1A / CBS 708.71 / DSM 1257 / FGSC 987), this protein is Large ribosomal subunit protein mL60 (mrpl31).